We begin with the raw amino-acid sequence, 214 residues long: ATP phosphoribosyltransferase (214 aa).

Belongs to the ATP phosphoribosyltransferase family. Short subfamily. In terms of assembly, heteromultimer composed of HisG and HisZ subunits.

It localises to the cytoplasm. The enzyme catalyses 1-(5-phospho-beta-D-ribosyl)-ATP + diphosphate = 5-phospho-alpha-D-ribose 1-diphosphate + ATP. It functions in the pathway amino-acid biosynthesis; L-histidine biosynthesis; L-histidine from 5-phospho-alpha-D-ribose 1-diphosphate: step 1/9. Catalyzes the condensation of ATP and 5-phosphoribose 1-diphosphate to form N'-(5'-phosphoribosyl)-ATP (PR-ATP). Has a crucial role in the pathway because the rate of histidine biosynthesis seems to be controlled primarily by regulation of HisG enzymatic activity. This chain is ATP phosphoribosyltransferase, found in Streptococcus sanguinis (strain SK36).